The chain runs to 139 residues: Protein AC53 (139 aa).

It localises to the host cytoplasm. It is found in the host nucleus. Functionally, plays a role in nucleocapsid assembly. In Lepidoptera (butterflies and moths), this protein is Protein AC53 (AC53).